The chain runs to 927 residues: Echinoderm microtubule-associated protein-like 4 (927 aa).

Residues 1 to 189 (MDGFAGSLDD…IPSDVENYDD (189 aa)) form a microtubule-binding region. The stretch at 14–63 (AASTSDVQDRLSALELRVQQQEDEITVLKAALADVLRRLAISEDQVATVR) forms a coiled coil. Positions 85–132 (NGGAGTRKPSHASSVAKKDTLSSAAKSVKRSSTLEKSHNSWDASEESR) are disordered. Residues 116-132 (STLEKSHNSWDASEESR) show a composition bias toward basic and acidic residues. WD repeat units follow at residues 199-237 (LKLE…LFNY), 241-288 (TQRH…VWDS), 296-336 (VIGL…VWDW), 343-378 (AEIK…FWTW), 385-424 (RKQG…IWSK), 442-480 (QISK…MWDH), 485-521 (EREI…LRGT), 524-563 (DGFQ…LWNS), 567-604 (SLEW…VLDA), 610-646 (VSIH…LYNV), 653-692 (YSRY…YWDI), 702-760 (RSEC…LFQY), and 767-806 (APSH…QWRL). The segment covering 815–829 (NDNIAESSSAVNSPV) has biased composition (polar residues). Residues 815-927 (NDNIAESSSA…NQDDDDAPLS (113 aa)) are disordered. Residues 914 to 927 (AQDENQDDDDAPLS) show a composition bias toward acidic residues.

It belongs to the WD repeat EMAP family. Homotrimer; self-association is mediated by the N-terminal coiled coil.

The protein localises to the cytoplasm. Its subcellular location is the cytoskeleton. It is found in the spindle. The protein resides in the microtubule organizing center. It localises to the midbody. Its function is as follows. Essential for the formation and stability of microtubules (MTs). Required for the organization of the mitotic spindle and for the proper attachment of kinetochores to MTs. Promotes the recruitment of NUDC to the mitotic spindle for mitotic progression. The chain is Echinoderm microtubule-associated protein-like 4 (eml4) from Xenopus laevis (African clawed frog).